The following is a 345-amino-acid chain: Anthranilate phosphoribosyltransferase (345 aa).

5-phospho-alpha-D-ribose 1-diphosphate is bound by residues Gly84, 87-88 (GD), Thr92, 94-97 (NIST), 112-120 (KHGGRGVSS), and Ser124. Gly84 serves as a coordination point for anthranilate. Ser96 provides a ligand contact to Mg(2+). Arg170 is an anthranilate binding site. The Mg(2+) site is built by Asp229 and Glu230.

This sequence belongs to the anthranilate phosphoribosyltransferase family. In terms of assembly, homodimer. The cofactor is Mg(2+).

It catalyses the reaction N-(5-phospho-beta-D-ribosyl)anthranilate + diphosphate = 5-phospho-alpha-D-ribose 1-diphosphate + anthranilate. Its pathway is amino-acid biosynthesis; L-tryptophan biosynthesis; L-tryptophan from chorismate: step 2/5. Functionally, catalyzes the transfer of the phosphoribosyl group of 5-phosphorylribose-1-pyrophosphate (PRPP) to anthranilate to yield N-(5'-phosphoribosyl)-anthranilate (PRA). This chain is Anthranilate phosphoribosyltransferase, found in Paracidovorax citrulli (strain AAC00-1) (Acidovorax citrulli).